The primary structure comprises 239 residues: Uridylate kinase (239 aa).

12-15 (KLSG) serves as a coordination point for ATP. Residues 20-25 (GDQGYG) form an involved in allosteric activation by GTP region. UMP is bound at residue G54. Residues G55 and R59 each coordinate ATP. UMP-binding positions include D74 and 135 to 142 (TGNPYFTT). ATP is bound by residues T162, Y168, and D171.

The protein belongs to the UMP kinase family. In terms of assembly, homohexamer.

It localises to the cytoplasm. The enzyme catalyses UMP + ATP = UDP + ADP. It functions in the pathway pyrimidine metabolism; CTP biosynthesis via de novo pathway; UDP from UMP (UMPK route): step 1/1. With respect to regulation, allosterically activated by GTP. Inhibited by UTP. In terms of biological role, catalyzes the reversible phosphorylation of UMP to UDP. This chain is Uridylate kinase, found in Geobacter metallireducens (strain ATCC 53774 / DSM 7210 / GS-15).